A 167-amino-acid chain; its full sequence is Bacterial non-heme ferritin (167 aa).

Residues 1–145 (MLSKDIIKLL…DILDKIELIG (145 aa)) enclose the Ferritin-like diiron domain. 5 residues coordinate Fe cation: glutamate 17, glutamate 50, histidine 53, glutamate 94, and glutamine 127.

It belongs to the ferritin family. Prokaryotic subfamily. Homooligomer of 24 subunits that assemble into a spherical protein shell (12 +/- 1 nM diameter) that can sequester at least 2000 iron atoms.

It is found in the cytoplasm. It carries out the reaction 4 Fe(2+) + O2 + 6 H2O = 4 iron(III) oxide-hydroxide + 12 H(+). Its function is as follows. Iron-storage protein. The protein is Bacterial non-heme ferritin (ftnA) of Helicobacter pylori (strain J99 / ATCC 700824) (Campylobacter pylori J99).